The chain runs to 297 residues: MRSPICHLFSAINSSPFKIAPEKEQDLKTIVDDKKIIISVVSEPGFNIRVRKNESNNSHEIVLTVASLEYIWAFSNFFWVFTQEYSKSQKNNDEHFDLTGKNRLKKSDELLKWARKNLQTTGCESWPKKCPKPEAYLQGSEDSQVASEIFLCAIAWILHHEISHVVLQHPLVTTAFSTQEEREADSHATKWILGNLYESAPELKKRALGIATAVLCIQSLEVENYFCLQNTHPAAYERIYSNISCYPVGNEELIEALCTVMLQYLFHGKNINVNLDGESFSSILGDLLCDISRLTSN.

The next 2 helical transmembrane spans lie at 61–82 (IVLT…WVFT) and 149–178 (IFLC…AFST).

It belongs to the peptidase U49 family.

The protein resides in the cell membrane. Interacts with a short DNA sequence about one-quarter of the way into the major capsid protein gene 23 of T4; general translation inhibition occurs when this late gene of the virus is expressed. This Escherichia coli (strain K12) protein is Cell death peptidase (lit).